The primary structure comprises 412 residues: Esterase EstD (412 aa).

The signal sequence occupies residues 1–20 (MRLTVFLSLFLGVMVFGAFD). S243 (nucleophile) is an active-site residue. Residues D347 and H378 each act as charge relay system in the active site.

This sequence belongs to the AB hydrolase superfamily. Esterase 10 family. In terms of assembly, exists mainly as a monomer and, to some extent as a dimer.

The enzyme catalyses a carboxylic ester + H2O = an alcohol + a carboxylate + H(+). Is strongly inhibited by phenylmethylsulfonyl fluoride, a serine protease inhibitor, and by mercury chloride. Diethyl pyrocarbonate, a histidine modifier, also inhibits the reaction, albeit less pronounced than phenylmethylsulfonyl fluoride. EDTA and dithiothreitol have no effect on enzyme activity. In terms of biological role, exhibits significant esterase activity with a preference for short acyl chain esters (C4-C8) in vitro. Its physiological function is not known. Displays neither proteolytic activity using casein as substrate, nor peptidase activity when assayed with L-leucine p-nitroanilide and L-proline p-nitroanilide. This is Esterase EstD from Thermotoga maritima (strain ATCC 43589 / DSM 3109 / JCM 10099 / NBRC 100826 / MSB8).